The following is a 257-amino-acid chain: uncharacterized protein (257 aa).

A Phosphoserine modification is found at Ser-127. Disordered regions lie at residues 146–174 and 210–231; these read HEDP…EDDG and AREK…RREK. Positions 151–160 are enriched in polar residues; sequence PSSTYNSSIS. The stretch at 196–257 forms a coiled coil; sequence HVRMVREVHE…QQQQEDEQKT (62 aa).

This is an uncharacterized protein from Arabidopsis thaliana (Mouse-ear cress).